The primary structure comprises 861 residues: Glucans biosynthesis glucosyltransferase H (861 aa).

Disordered stretches follow at residues 65–89 (RLSA…SVGR) and 101–129 (AGEP…SMVP). Composition is skewed to basic and acidic residues over residues 67 to 76 (SAREPAKGET) and 105 to 114 (LLKRRPDGTV). Transmembrane regions (helical) follow at residues 181 to 201 (FLLG…TKVL), 208 to 228 (LLEI…SAGF), 532 to 552 (VFLT…FLLL), 589 to 609 (LFSA…LLLV), 616 to 636 (GGLP…ALLA), and 698 to 718 (FVLW…LSVM).

It belongs to the glycosyltransferase 2 family. OpgH subfamily.

Its subcellular location is the cell inner membrane. Its pathway is glycan metabolism; osmoregulated periplasmic glucan (OPG) biosynthesis. Involved in the biosynthesis of osmoregulated periplasmic glucans (OPGs). This Cupriavidus pinatubonensis (strain JMP 134 / LMG 1197) (Cupriavidus necator (strain JMP 134)) protein is Glucans biosynthesis glucosyltransferase H.